The chain runs to 233 residues: MPVKLAQALANTLFPALDSQLRAGRHIGIDELDNHAFLMDFQEQLEEFYARYNVELIRAPEGFFYLRPRSTTLIPRSVLSELDMMVGKILCYLYLSPERLAHEGIFSQQELYEELLSLADESKLLKFVNQRSTGSDLDKQKLQEKVRTSLNRLRRLGMIYFMGNDSTKFRITEAVFRFGADVRSGDDQREAQLRMIRDGEAMAVENSLSLHDESDDADVTMGNAADSVEDEQE.

Residues Ser207–Glu233 are disordered.

This sequence belongs to the MukE family. Interacts, and probably forms a ternary complex, with MukF and MukB. The complex formation is stimulated by calcium or magnesium.

It is found in the cytoplasm. It localises to the nucleoid. Involved in chromosome condensation, segregation and cell cycle progression. May participate in facilitating chromosome segregation by condensation DNA from both sides of a centrally located replisome during cell division. Probably acts via its interaction with MukB and MukF. The protein is Chromosome partition protein MukE of Yersinia pestis.